The primary structure comprises 1447 residues: Gag-Pol polyprotein (1447 aa).

Gly2 carries N-myristoyl glycine; by host lipidation. The segment at 7–31 is interaction with Gp41; it reads VLSGGELDRWEKIRLRPGGKKKYKL. The segment at 8 to 43 is interaction with host CALM1; it reads LSGGELDRWEKIRLRPGGKKKYKLKHIVWASRELER. The segment at 12-19 is interaction with host AP3D1; sequence ELDRWEKI. An interaction with membrane phosphatidylinositol 4,5-bisphosphate and RNA region spans residues 14–33; that stretch reads DRWEKIRLRPGGKKKYKLKH. A Nuclear export signal motif is present at residues 16 to 22; the sequence is WEKIRLR. Residues 26–32 carry the Nuclear localization signal motif; that stretch reads KKKYKLK. The tract at residues 73-77 is interaction with membrane phosphatidylinositol 4,5-bisphosphate; that stretch reads EELRS. The tract at residues 106 to 128 is disordered; sequence EEQNKSKKKAQQAAADTGHSSQV. Tyr132 is subject to Phosphotyrosine; by host. Residues 189 to 227 are interaction with human PPIA/CYPA and NUP153; that stretch reads NTVGGHQAAMQMLKETINEEAAEWDRVHPVHAGPIAPGQ. The dimerization/Multimerization of capsid protein p24 stretch occupies residues 277–363; the sequence is YSPTSILDIR…GGPGHKARVL (87 aa). Arg387 carries the asymmetric dimethylarginine; in Nucleocapsid protein p7; by host PRMT6 modification. The segment at 390–407 adopts a CCHC-type 1 zinc-finger fold; that stretch reads VKCFNCGKEGHTARNCRA. Residue Arg409 is modified to Asymmetric dimethylarginine; in Nucleocapsid protein p7; by host PRMT6. The CCHC-type 2 zinc finger occupies 411 to 428; it reads KGCWKCGKEGHQMKDCTE. A disordered region spans residues 446–493; the sequence is REFSSEQTRANSPTISSEQTRANSPTRRELQVWGRDNNSPSEAGADRQ. A compositionally biased stretch (polar residues) spans 450–470; sequence SEQTRANSPTISSEQTRANSP. Residues 501 to 505 form a dimerization of protease region; sequence PQITL. The region spanning 520-589 is the Peptidase A2 domain; sequence KEALLDTGAD…TPVNIIGRNL (70 aa). Catalysis depends on Asp525, which acts as the For protease activity; shared with dimeric partner. Dimerization of protease regions lie at residues 549-555 and 588-600; these read GIGGFIK and NLLTQIGCTLNFP. Residues 643–833 form the Reverse transcriptase domain; the sequence is EGKISKIGPE…PPFLWMGYEL (191 aa). Mg(2+) is bound by residues Asp709, Asp784, and Asp785. Positions 826–834 are RT 'primer grip'; that stretch reads FLWMGYELH. Residues 997–1013 carry the Tryptophan repeat motif motif; sequence WETWWTEYWQATWIPEW. The RNase H type-1 domain occupies 1033–1156; the sequence is IVGAETFYVD…VDKLVSAGIR (124 aa). Residues Asp1042, Glu1077, Asp1097, and Asp1148 each contribute to the Mg(2+) site. Residues 1162–1203 form an Integrase-type zinc finger; that stretch reads DGIDKAQDEHEKYHSNWRAMASDFNLPPVVAKEIVASCDKCQ. His1171, His1175, Cys1199, and Cys1202 together coordinate Zn(2+). The region spanning 1213–1363 is the Integrase catalytic domain; it reads VDCSPGIWQL…SAGERIVDII (151 aa). Mg(2+)-binding residues include Asp1223, Asp1275, and Glu1311. A DNA-binding region (integrase-type) is located at residues 1382 to 1429; the sequence is FRVYYRDSRNPLWKGPAKLLWKGEGAVVIQDNSDIKVVPRRKAKIIRD.

Homotrimer; further assembles as hexamers of trimers. Interacts with gp41 (via C-terminus). Interacts with host CALM1; this interaction induces a conformational change in the Matrix protein, triggering exposure of the myristate group. Interacts with host AP3D1; this interaction allows the polyprotein trafficking to multivesicular bodies during virus assembly. Part of the pre-integration complex (PIC) which is composed of viral genome, matrix protein, Vpr and integrase. As to quaternary structure, homodimer; the homodimer further multimerizes as homohexamers or homopentamers. Interacts with human PPIA/CYPA; This interaction stabilizes the capsid. Interacts with human NUP153. Interacts with host PDZD8; this interaction stabilizes the capsid. Interacts with monkey TRIM5; this interaction destabilizes the capsid. In terms of assembly, homodimer, whose active site consists of two apposed aspartic acid residues. Heterodimer of p66 RT and p51 RT (RT p66/p51). Heterodimerization of RT is essential for DNA polymerase activity. The overall folding of the subdomains is similar in p66 RT and p51 RT but the spatial arrangements of the subdomains are dramatically different. As to quaternary structure, homotetramer; may further associate as a homohexadecamer. Part of the pre-integration complex (PIC) which is composed of viral genome, matrix protein, Vpr and integrase. Interacts with human SMARCB1/INI1 and human PSIP1/LEDGF isoform 1. Interacts with human KPNA3; this interaction might play a role in nuclear import of the pre-integration complex. Interacts with human NUP153; this interaction might play a role in nuclear import of the pre-integration complex. Mg(2+) is required as a cofactor. Post-translationally, specific enzymatic cleavages by the viral protease yield mature proteins. The protease is released by autocatalytic cleavage. The polyprotein is cleaved during and after budding, this process is termed maturation. Proteolytic cleavage of p66 RT removes the RNase H domain to yield the p51 RT subunit. Nucleocapsid protein p7 might be further cleaved after virus entry. In terms of processing, tyrosine phosphorylated presumably in the virion by a host kinase. Phosphorylation is apparently not a major regulator of membrane association. Phosphorylated possibly by host MAPK1; this phosphorylation is necessary for Pin1-mediated virion uncoating. Post-translationally, methylated by host PRMT6, impairing its function by reducing RNA annealing and the initiation of reverse transcription.

The protein resides in the host cell membrane. The protein localises to the host endosome. It localises to the host multivesicular body. Its subcellular location is the virion membrane. It is found in the host nucleus. The protein resides in the host cytoplasm. The protein localises to the virion. The enzyme catalyses Specific for a P1 residue that is hydrophobic, and P1' variable, but often Pro.. It catalyses the reaction 3'-end directed exonucleolytic cleavage of viral RNA-DNA hybrid.. The catalysed reaction is Endohydrolysis of RNA in RNA/DNA hybrids. Three different cleavage modes: 1. sequence-specific internal cleavage of RNA. Human immunodeficiency virus type 1 and Moloney murine leukemia virus enzymes prefer to cleave the RNA strand one nucleotide away from the RNA-DNA junction. 2. RNA 5'-end directed cleavage 13-19 nucleotides from the RNA end. 3. DNA 3'-end directed cleavage 15-20 nucleotides away from the primer terminus.. It carries out the reaction DNA(n) + a 2'-deoxyribonucleoside 5'-triphosphate = DNA(n+1) + diphosphate. Its activity is regulated as follows. Protease: The viral protease is inhibited by many synthetic protease inhibitors (PIs), such as amprenavir, atazanavir, indinavir, loprinavir, nelfinavir, ritonavir and saquinavir. Use of protease inhibitors in tritherapy regimens permit more ambitious therapeutic strategies. Reverse transcriptase/ribonuclease H: RT can be inhibited either by nucleoside RT inhibitors (NRTIs) or by non nucleoside RT inhibitors (NNRTIs). NRTIs act as chain terminators, whereas NNRTIs inhibit DNA polymerization by binding a small hydrophobic pocket near the RT active site and inducing an allosteric change in this region. Classical NRTIs are abacavir, adefovir (PMEA), didanosine (ddI), lamivudine (3TC), stavudine (d4T), tenofovir (PMPA), zalcitabine (ddC), and zidovudine (AZT). Classical NNRTIs are atevirdine (BHAP U-87201E), delavirdine, efavirenz (DMP-266), emivirine (I-EBU), and nevirapine (BI-RG-587). The tritherapies used as a basic effective treatment of AIDS associate two NRTIs and one NNRTI. Its function is as follows. Mediates, with Gag polyprotein, the essential events in virion assembly, including binding the plasma membrane, making the protein-protein interactions necessary to create spherical particles, recruiting the viral Env proteins, and packaging the genomic RNA via direct interactions with the RNA packaging sequence (Psi). Gag-Pol polyprotein may regulate its own translation, by the binding genomic RNA in the 5'-UTR. At low concentration, the polyprotein would promote translation, whereas at high concentration, the polyprotein would encapsidate genomic RNA and then shut off translation. In terms of biological role, targets the polyprotein to the plasma membrane via a multipartite membrane-binding signal, that includes its myristoylated N-terminus. Matrix protein is part of the pre-integration complex. Implicated in the release from host cell mediated by Vpu. Binds to RNA. Functionally, forms the conical core that encapsulates the genomic RNA-nucleocapsid complex in the virion. Most core are conical, with only 7% tubular. The core is constituted by capsid protein hexamer subunits. The core is disassembled soon after virion entry. Host restriction factors such as TRIM5-alpha or TRIMCyp bind retroviral capsids and cause premature capsid disassembly, leading to blocks in reverse transcription. Capsid restriction by TRIM5 is one of the factors which restricts HIV-1 to the human species. Host PIN1 apparently facilitates the virion uncoating. On the other hand, interactions with PDZD8 or CYPA stabilize the capsid. Encapsulates and protects viral dimeric unspliced genomic RNA (gRNA). Binds these RNAs through its zinc fingers. Acts as a nucleic acid chaperone which is involved in rearangement of nucleic acid secondary structure during gRNA retrotranscription. Also facilitates template switch leading to recombination. As part of the polyprotein, participates in gRNA dimerization, packaging, tRNA incorporation and virion assembly. Its function is as follows. Aspartyl protease that mediates proteolytic cleavages of Gag and Gag-Pol polyproteins during or shortly after the release of the virion from the plasma membrane. Cleavages take place as an ordered, step-wise cascade to yield mature proteins. This process is called maturation. Displays maximal activity during the budding process just prior to particle release from the cell. Also cleaves Nef and Vif, probably concomitantly with viral structural proteins on maturation of virus particles. Hydrolyzes host EIF4GI and PABP1 in order to shut off the capped cellular mRNA translation. The resulting inhibition of cellular protein synthesis serves to ensure maximal viral gene expression and to evade host immune response. Also mediates cleavage of host YTHDF3. Mediates cleavage of host CARD8, thereby activating the CARD8 inflammasome, leading to the clearance of latent HIV-1 in patient CD4(+) T-cells after viral reactivation; in contrast, HIV-1 can evade CARD8-sensing when its protease remains inactive in infected cells prior to viral budding. In terms of biological role, multifunctional enzyme that converts the viral RNA genome into dsDNA in the cytoplasm, shortly after virus entry into the cell. This enzyme displays a DNA polymerase activity that can copy either DNA or RNA templates, and a ribonuclease H (RNase H) activity that cleaves the RNA strand of RNA-DNA heteroduplexes in a partially processive 3' to 5' endonucleasic mode. Conversion of viral genomic RNA into dsDNA requires many steps. A tRNA(3)-Lys binds to the primer-binding site (PBS) situated at the 5'-end of the viral RNA. RT uses the 3' end of the tRNA primer to perform a short round of RNA-dependent minus-strand DNA synthesis. The reading proceeds through the U5 region and ends after the repeated (R) region which is present at both ends of viral RNA. The portion of the RNA-DNA heteroduplex is digested by the RNase H, resulting in a ssDNA product attached to the tRNA primer. This ssDNA/tRNA hybridizes with the identical R region situated at the 3' end of viral RNA. This template exchange, known as minus-strand DNA strong stop transfer, can be either intra- or intermolecular. RT uses the 3' end of this newly synthesized short ssDNA to perform the RNA-dependent minus-strand DNA synthesis of the whole template. RNase H digests the RNA template except for two polypurine tracts (PPTs) situated at the 5'-end and near the center of the genome. It is not clear if both polymerase and RNase H activities are simultaneous. RNase H probably can proceed both in a polymerase-dependent (RNA cut into small fragments by the same RT performing DNA synthesis) and a polymerase-independent mode (cleavage of remaining RNA fragments by free RTs). Secondly, RT performs DNA-directed plus-strand DNA synthesis using the PPTs that have not been removed by RNase H as primers. PPTs and tRNA primers are then removed by RNase H. The 3' and 5' ssDNA PBS regions hybridize to form a circular dsDNA intermediate. Strand displacement synthesis by RT to the PBS and PPT ends produces a blunt ended, linear dsDNA copy of the viral genome that includes long terminal repeats (LTRs) at both ends. Functionally, catalyzes viral DNA integration into the host chromosome, by performing a series of DNA cutting and joining reactions. This enzyme activity takes place after virion entry into a cell and reverse transcription of the RNA genome in dsDNA. The first step in the integration process is 3' processing. This step requires a complex comprising the viral genome, matrix protein, Vpr and integrase. This complex is called the pre-integration complex (PIC). The integrase protein removes 2 nucleotides from each 3' end of the viral DNA, leaving recessed CA OH's at the 3' ends. In the second step, the PIC enters cell nucleus. This process is mediated through integrase and Vpr proteins, and allows the virus to infect a non dividing cell. This ability to enter the nucleus is specific of lentiviruses, other retroviruses cannot and rely on cell division to access cell chromosomes. In the third step, termed strand transfer, the integrase protein joins the previously processed 3' ends to the 5' ends of strands of target cellular DNA at the site of integration. The 5'-ends are produced by integrase-catalyzed staggered cuts, 5 bp apart. A Y-shaped, gapped, recombination intermediate results, with the 5'-ends of the viral DNA strands and the 3' ends of target DNA strands remaining unjoined, flanking a gap of 5 bp. The last step is viral DNA integration into host chromosome. This involves host DNA repair synthesis in which the 5 bp gaps between the unjoined strands are filled in and then ligated. Since this process occurs at both cuts flanking the HIV genome, a 5 bp duplication of host DNA is produced at the ends of HIV-1 integration. Alternatively, Integrase may catalyze the excision of viral DNA just after strand transfer, this is termed disintegration. The sequence is that of Gag-Pol polyprotein (gag-pol) from Human immunodeficiency virus type 1 group M subtype B (isolate BH10) (HIV-1).